We begin with the raw amino-acid sequence, 212 residues long: Leucyl/phenylalanyl-tRNA--protein transferase (212 aa).

Belongs to the L/F-transferase family.

The protein resides in the cytoplasm. The enzyme catalyses N-terminal L-lysyl-[protein] + L-leucyl-tRNA(Leu) = N-terminal L-leucyl-L-lysyl-[protein] + tRNA(Leu) + H(+). It catalyses the reaction N-terminal L-arginyl-[protein] + L-leucyl-tRNA(Leu) = N-terminal L-leucyl-L-arginyl-[protein] + tRNA(Leu) + H(+). The catalysed reaction is L-phenylalanyl-tRNA(Phe) + an N-terminal L-alpha-aminoacyl-[protein] = an N-terminal L-phenylalanyl-L-alpha-aminoacyl-[protein] + tRNA(Phe). Functions in the N-end rule pathway of protein degradation where it conjugates Leu, Phe and, less efficiently, Met from aminoacyl-tRNAs to the N-termini of proteins containing an N-terminal arginine or lysine. The polypeptide is Leucyl/phenylalanyl-tRNA--protein transferase (Christiangramia forsetii (strain DSM 17595 / CGMCC 1.15422 / KT0803) (Gramella forsetii)).